The primary structure comprises 278 residues: Large ribosomal subunit protein uL2 (278 aa).

Residues 226 to 278 are disordered; the sequence is MNPIDHPHGGGEGKTAAGRHPVSPWGTPSKGSRTRKNKRTSNMIVRSRYSKKG.

Belongs to the universal ribosomal protein uL2 family. Part of the 50S ribosomal subunit. Forms a bridge to the 30S subunit in the 70S ribosome.

Its function is as follows. One of the primary rRNA binding proteins. Required for association of the 30S and 50S subunits to form the 70S ribosome, for tRNA binding and peptide bond formation. It has been suggested to have peptidyltransferase activity; this is somewhat controversial. Makes several contacts with the 16S rRNA in the 70S ribosome. This is Large ribosomal subunit protein uL2 from Nitrosomonas europaea (strain ATCC 19718 / CIP 103999 / KCTC 2705 / NBRC 14298).